The sequence spans 404 residues: G1/S-specific cyclin-E2 (404 aa).

The interval 1–44 is disordered; that stretch reads MSRRSSRLQAKQQPQPSQTESPQEAQIIQAKKRKTTQDVKKRRE. Positions 12–26 are enriched in low complexity; sequence QQPQPSQTESPQEAQ. S21 is modified (phosphoserine). Positions 35–44 are enriched in basic and acidic residues; that stretch reads TTQDVKKRRE. An N6-lactoyllysine modification is found at K348. Phosphoserine is present on S383. T392 is modified (phosphothreonine).

The protein belongs to the cyclin family. Cyclin E subfamily. Interacts with the CDK2 (in vivo) and CDK3 (in vitro) protein kinases to form a serine/threonine kinase holoenzyme complex. The cyclin subunit imparts substrate specificity to the complex. Post-translationally, phosphorylation by CDK2 triggers its release from CDK2 and degradation via the ubiquitin proteasome pathway. In terms of processing, lactylated at Lys-348. Delactylated by SIRT3. As to expression, according to PubMed:9858585, highest levels of expression in adult testis, thymus and brain. Lower levels in placenta, spleen and colon. Consistently elevated levels in tumor-derived cells compared to non-transformed proliferating cells. According to PubMed:9840927: low levels in thymus, prostate, brain, skeletal muscle, and kidney. Elevated levels in lung. According to PubMed:9840943 highly expressed in testis, placenta, thymus and brain. In a lesser extent in small intestine and colon.

It localises to the nucleus. Essential for the control of the cell cycle at the late G1 and early S phase. This chain is G1/S-specific cyclin-E2 (CCNE2), found in Homo sapiens (Human).